A 420-amino-acid polypeptide reads, in one-letter code: Gamma-glutamyl phosphate reductase (420 aa).

The protein belongs to the gamma-glutamyl phosphate reductase family.

It is found in the cytoplasm. The catalysed reaction is L-glutamate 5-semialdehyde + phosphate + NADP(+) = L-glutamyl 5-phosphate + NADPH + H(+). It functions in the pathway amino-acid biosynthesis; L-proline biosynthesis; L-glutamate 5-semialdehyde from L-glutamate: step 2/2. In terms of biological role, catalyzes the NADPH-dependent reduction of L-glutamate 5-phosphate into L-glutamate 5-semialdehyde and phosphate. The product spontaneously undergoes cyclization to form 1-pyrroline-5-carboxylate. The chain is Gamma-glutamyl phosphate reductase from Streptococcus pneumoniae (strain P1031).